The following is a 1064-amino-acid chain: Phosphatidylinositol 4,5-bisphosphate 3-kinase catalytic subunit beta isoform (1064 aa).

Positions S20–S109 constitute a PI3K-ABD domain. One can recognise a PI3K-RBD domain in the interval G188 to E279. At S318 the chain carries Phosphoserine. A C2 PI3K-type domain is found at N323 to P490. A Nuclear localization signal (NLS) motif is present at residues K404–K412. The PIK helical domain maps to A518–G695. Positions Y766–W1047 constitute a PI3K/PI4K catalytic domain. The interval Y772 to K778 is G-loop. Positions G910–N918 are catalytic loop. The tract at residues H929–T955 is activation loop. S1064 is subject to Phosphoserine; by autocatalysis.

This sequence belongs to the PI3/PI4-kinase family. In terms of assembly, heterodimer of a catalytic subunit PIK3CB and a p85 regulatory subunit (PIK3R1, PIK3R2 or PIK3R3). Interaction with PIK3R2 is required for nuclear localization and nuclear export. Part of a complex with PIK3R1 and PTEN. Binding to PTEN may antagonize the lipid kinase activity under normal growth conditions. Part of a complex involved in autophagosome formation composed of PIK3C3 and PIK3R4. Interacts with BECN1, ATG14 and RAB5A. Post-translationally, phosphorylation at Ser-1064 down-regulates lipid kinase activity. In terms of processing, autophosphorylation at Ser-1064 negatively regulates the phosphatidylinositol-4,5-bisphosphate 3-kinase activity.

The protein resides in the cytoplasm. It localises to the nucleus. The catalysed reaction is a 1,2-diacyl-sn-glycero-3-phospho-(1D-myo-inositol-4,5-bisphosphate) + ATP = a 1,2-diacyl-sn-glycero-3-phospho-(1D-myo-inositol-3,4,5-trisphosphate) + ADP + H(+). It carries out the reaction 1-octadecanoyl-2-(5Z,8Z,11Z,14Z)-eicosatetraenoyl-sn-glycero-3-phospho-1D-myo-inositol 4,5-bisphosphate + ATP = 1-octadecanoyl-2-(5Z,8Z,11Z,14Z-eicosatetraenoyl)-sn-glycero-3-phospho-(1D-myo-inositol 3,4,5-triphosphate) + ADP + H(+). The enzyme catalyses L-seryl-[protein] + ATP = O-phospho-L-seryl-[protein] + ADP + H(+). The protein operates within phospholipid metabolism; phosphatidylinositol phosphate biosynthesis. In terms of biological role, phosphoinositide-3-kinase (PI3K) phosphorylates phosphatidylinositol (PI) derivatives at position 3 of the inositol ring to produce 3-phosphoinositides. Uses ATP and PtdIns(4,5)P2 (phosphatidylinositol 4,5-bisphosphate) to generate phosphatidylinositol 3,4,5-trisphosphate (PIP3). PIP3 plays a key role by recruiting PH domain-containing proteins to the membrane, including AKT1 and PDPK1, activating signaling cascades involved in cell growth, survival, proliferation, motility and morphology. Involved in the activation of AKT1 upon stimulation by G-protein coupled receptors (GPCRs) ligands such as CXCL12, sphingosine 1-phosphate, and lysophosphatidic acid. May also act downstream receptor tyrosine kinases. Required in different signaling pathways for stable platelet adhesion and aggregation. Plays a role in platelet activation signaling triggered by GPCRs, alpha-IIb/beta-3 integrins (ITGA2B/ ITGB3) and ITAM (immunoreceptor tyrosine-based activation motif)-bearing receptors such as GP6. Regulates the strength of adhesion of ITGA2B/ ITGB3 activated receptors necessary for the cellular transmission of contractile forces. Required for platelet aggregation induced by F2 (thrombin) and thromboxane A2 (TXA2). Has a role in cell survival. May have a role in cell migration. Involved in the early stage of autophagosome formation. Modulates the intracellular level of PtdIns3P (phosphatidylinositol 3-phosphate) and activates PIK3C3 kinase activity. May act as a scaffold, independently of its lipid kinase activity to positively regulate autophagy. May have a role in insulin signaling as scaffolding protein in which the lipid kinase activity is not required. May have a kinase-independent function in regulating cell proliferation and in clathrin-mediated endocytosis. Mediator of oncogenic signal in cell lines lacking PTEN. The lipid kinase activity is necessary for its role in oncogenic transformation. Required for the growth of ERBB2 and RAS driven tumors. Also has a protein kinase activity showing autophosphorylation. The chain is Phosphatidylinositol 4,5-bisphosphate 3-kinase catalytic subunit beta isoform (Pik3cb) from Mus musculus (Mouse).